The following is a 335-amino-acid chain: 5-formaminoimidazole-4-carboxamide-1-(beta)-D-ribofuranosyl 5'-monophosphate synthetase (335 aa).

2 residues coordinate 5-amino-1-(5-phospho-beta-D-ribosyl)imidazole-4-carboxamide: H21 and S86. Positions 107–315 (RELLRWEADQ…YFDKPMDMGE (209 aa)) constitute an ATP-grasp domain. ATP-binding positions include 137–189 (PTEV…VPAY) and E211. N231 serves as a coordination point for 5-amino-1-(5-phospho-beta-D-ribosyl)imidazole-4-carboxamide. 2 residues coordinate Mg(2+): E270 and E283.

This sequence belongs to the phosphohexose mutase family. It depends on Mg(2+) as a cofactor. The cofactor is Mn(2+).

It carries out the reaction 5-amino-1-(5-phospho-beta-D-ribosyl)imidazole-4-carboxamide + formate + ATP = 5-formamido-1-(5-phospho-D-ribosyl)imidazole-4-carboxamide + ADP + phosphate. It functions in the pathway purine metabolism; IMP biosynthesis via de novo pathway; 5-formamido-1-(5-phospho-D-ribosyl)imidazole-4-carboxamide from 5-amino-1-(5-phospho-D-ribosyl)imidazole-4-carboxamide (formate route): step 1/1. Functionally, catalyzes the ATP- and formate-dependent formylation of 5-aminoimidazole-4-carboxamide-1-beta-d-ribofuranosyl 5'-monophosphate (AICAR) to 5-formaminoimidazole-4-carboxamide-1-beta-d-ribofuranosyl 5'-monophosphate (FAICAR) in the absence of folates. The polypeptide is 5-formaminoimidazole-4-carboxamide-1-(beta)-D-ribofuranosyl 5'-monophosphate synthetase (Pyrobaculum arsenaticum (strain DSM 13514 / JCM 11321 / PZ6)).